A 797-amino-acid chain; its full sequence is Short transient receptor potential channel 4-associated protein (797 aa).

Alanine 2 bears the N-acetylalanine mark. Positions 2–400 (AAAPVAAGSG…VLYVLCVLLM (399 aa)) are interaction with TNFRSF1A.

In terms of assembly, component of the DCX(TRPC4AP) E3 ubiquitin ligase complex, at least composed of CUL4A, DDB1, TRPC4AP/TRUSS and RBX1. Interacts with MYC. Constitutively associated with TNFRSF1A. Directly interacts with TRADD, TRAF2, CHUK, IKBKB and IKBKG. Interacts with TRPC1, TRPC4 and TRPC5. (Microbial infection) Interacts with Hepatitis B virus (HBV) protein X; leading to prevent ubiquitination of TRPC4AP by SKP2. Post-translationally, phosphorylated by GSK3B; phosphorylation is required for ubiquitination. In terms of processing, ubiquitinated by a SCF (SKP1-CUL1-F-box protein) E3 ubiquitin-protein ligase containing SKP2, leading to its degradation. Phosphorylation by GSK3B is required for ubiquitination.

Its subcellular location is the cytoplasm. The protein resides in the perinuclear region. It functions in the pathway protein modification; protein ubiquitination. Substrate-recognition component of a DCX (DDB1-CUL4-X-box) E3 ubiquitin-protein ligase complex required for cell cycle control. The DCX(TRPC4AP) complex specifically mediates the polyubiquitination and subsequent degradation of MYC as part of the DesCEND (destruction via C-end degrons) pathway. The DesCEND (destruction via C-end degrons) pathway recognizes a C-degron located at the extreme C terminus of target proteins, leading to their ubiquitination and degradation. The DCX(TRPC4AP) complex specifically recognizes proteins with an arginine at the minus 3 position (R-3 motif) at the C-terminus, such as MYC, leading to their ubiquitination and degradation. Also participates in the activation of NFKB1 in response to ligation of TNFRSF1A, possibly by linking TNFRSF1A to the IKK signalosome. Involved in JNK activation via its interaction with TRAF2. Also involved in elevation of endoplasmic reticulum Ca(2+) storage reduction in response to CHRM1. This chain is Short transient receptor potential channel 4-associated protein, found in Homo sapiens (Human).